Here is a 283-residue protein sequence, read N- to C-terminus: MKRLWKKVGSGVKNANYLKKSVEEVAKIEKGETKVVPPKYPTEKSREVSEEIKKELAMKNESLVENMNKMYIKSTDPVERWTSTKDLPTRESEFLHRNDPIWEYGFYEPPVERIPKDKLMFKEALEYLRFRQELLSDSSSPAQKKQAAEFVADHVVTSRVNAETLDDIYEYFRPFERKDKQKVVNRHALAALQDHVQGNSDERRILDEAKDVGKKIRHISNNTKFLDEYQRLEDEEKDKVREAIAQLRQEEHERLNKRLGQLGEIEKTAQEAMKKAVEEKKEK.

This is an uncharacterized protein from Caenorhabditis elegans.